Here is a 370-residue protein sequence, read N- to C-terminus: Probable endopolygalacturonase A (370 aa).

Residues 1-19 form the signal peptide; the sequence is MPSAKPLFCLATLAGAALA. A propeptide spanning residues 20–32 is cleaved from the precursor; the sequence is APAPSRVSDFTKR. An intrachain disulfide couples Cys35 to Cys50. 6 PbH1 repeats span residues 162 to 192, 193 to 214, 215 to 235, 244 to 265, 273 to 295, and 307 to 352; these read SDNL…DISE, STYI…AINS, GENI…SIGS, VKNV…RIKT, VEDI…VIEQ, and SNGV…DITG. Asp207 acts as the Proton donor in catalysis. A disulfide bond links Cys209 and Cys225. Residue His229 is part of the active site. The N-linked (GlcNAc...) asparagine glycan is linked to Asn246. Cystine bridges form between Cys335–Cys340 and Cys359–Cys368.

The protein belongs to the glycosyl hydrolase 28 family.

The protein resides in the secreted. It carries out the reaction (1,4-alpha-D-galacturonosyl)n+m + H2O = (1,4-alpha-D-galacturonosyl)n + (1,4-alpha-D-galacturonosyl)m.. Its function is as follows. Involved in maceration and soft-rotting of plant tissue. Hydrolyzes the 1,4-alpha glycosidic bonds of de-esterified pectate in the smooth region of the plant cell wall. The polypeptide is Probable endopolygalacturonase A (pgaA) (Aspergillus niger (strain ATCC MYA-4892 / CBS 513.88 / FGSC A1513)).